Consider the following 2057-residue polypeptide: Fer-1-like protein 5 (2057 aa).

C2 domains follow at residues 1 to 99 (MLRL…VLFV), 152 to 265 (PGST…TLLR), 308 to 425 (DDTD…EGVY), 1057 to 1188 (DTRP…MRWH), 1213 to 1346 (KLGE…AQDY), 1467 to 1587 (PKPP…AHCG), and 1705 to 1853 (GPPG…KQCS). Ca(2+)-binding residues include D1502, D1508, D1557, F1558, D1559, S1562, D1565, D1824, S1827, and D1830. The helical transmembrane segment at 1962–1982 (LIAFMVISIIALMLFNFIYSA) threads the bilayer.

It belongs to the ferlin family. In terms of assembly, interacts (via second C2 domain) with EHD1 and EHD2. Ca(2+) is required as a cofactor.

The protein resides in the cell membrane. It localises to the membrane. Plays a role in myoblast fusion; probable mediator of endocytic recycling for membrane trafficking events during myotube formation. The polypeptide is Fer-1-like protein 5 (FER1L5) (Homo sapiens (Human)).